The sequence spans 60 residues: Disagregin (60 aa).

The Cell attachment site; atypical motif lies at 14 to 16 (RED).

As to expression, expressed in salivary glands.

Its subcellular location is the secreted. Tick salivary platelet aggregation inhibitor that plays an important part in the anti-hemostatic strategy of ticks. Inhibits fibrinogen interaction with platelets. Acts by binding (in a divalent metal ion dependent manner) to the glycoprotein IIb-IIIa receptor (ITGA2B/ITGB3) on the platelet surface and inhibits aggregation induced by ADP (IC(50)=99-104 nM), thrombin, collagen (IC(50)=64 nM) platelet-activating factor and collagen. Interacts to unstimulated platelets (Kd=42.5 nM) and to ADP-stimulated platelets (Kd=39.4 nM). In contrast to many disintegrins which only interact with the beta-3 subunit, interacts with the two subunits (alpha-IIb and beta-3). Under flow conditions, reduces and delays platelet adhesion, aggregation, and fibrin formation. This is Disagregin from Ornithodoros moubata (Soft tick).